The following is a 616-amino-acid chain: Proline--tRNA ligase (616 aa).

The protein belongs to the class-II aminoacyl-tRNA synthetase family. ProS type 1 subfamily. Homodimer.

The protein resides in the cytoplasm. The enzyme catalyses tRNA(Pro) + L-proline + ATP = L-prolyl-tRNA(Pro) + AMP + diphosphate. In terms of biological role, catalyzes the attachment of proline to tRNA(Pro) in a two-step reaction: proline is first activated by ATP to form Pro-AMP and then transferred to the acceptor end of tRNA(Pro). As ProRS can inadvertently accommodate and process non-cognate amino acids such as alanine and cysteine, to avoid such errors it has two additional distinct editing activities against alanine. One activity is designated as 'pretransfer' editing and involves the tRNA(Pro)-independent hydrolysis of activated Ala-AMP. The other activity is designated 'posttransfer' editing and involves deacylation of mischarged Ala-tRNA(Pro). The misacylated Cys-tRNA(Pro) is not edited by ProRS. This is Proline--tRNA ligase from Lactococcus lactis subsp. cremoris (strain SK11).